We begin with the raw amino-acid sequence, 339 residues long: MMSNLPLDLVEEILSRVPATSLKRLRSTCRQWNALLKDRRFTEKHFRKAPKESLVLMLKEISVNLNVTPPSIEFKDALGLKDSHSNSEQVDIVQVLHCDGLLLCTTKDNRHVVWNPCLGETHWIQFKVDYGRVYSSFALGYIQNNESCRSYKILWRWKSNDYKSSPRQRGFEIYEFISDKWRVIDDVNHDSLVNHNYLGRCCRVSLKGNIYWLVDDVEDNSRSLLMFDFKTERFKRLCLPHFENVGHMVLSFVREEQLSVLYWSRATPKMEIWITNNIDTDATLLWRLHLDTRFNCVRIFSSLYFEEEKKVVLCCNVKLLMMIRSARTWYTLSERTMDI.

In terms of domain architecture, F-box spans 1–49 (MMSNLPLDLVEEILSRVPATSLKRLRSTCRQWNALLKDRRFTEKHFRKA).

The chain is F-box protein At3g22700 from Arabidopsis thaliana (Mouse-ear cress).